Here is a 372-residue protein sequence, read N- to C-terminus: MLVAVVKELKQGEGRVACTPENVRKLTDAGHKVIVEKNAGIGSGFSNDMYEKEGAKIVTHEQAWEADLVIKVKEPHESEYQYFKKNQIIWGFLHLASSKEIVEKMQEVGVTAISGETIIKNGKAELLAPMSAIAGQRSAIMGAYYSEAQHGGQGTLVTGVHENVDIPGSTYVIFGGGVAATNAANVALGLNAKVIIIELNDDRIKYLQDMYAEKDVTVVKSTPENLAEQIKKADVFISTILIPGAKPPKLVTREMVKSMKKGSVLIDIAIDQGGTIETIRPTTISDPVYEEEGVIHYGVPNQPGAVPRTSTMALAQGNIDYILEICDKGLEQAIKDNEALSTGVNIYQGQVTNQGLASSHDLDYKEILNVIE.

The active site involves histidine 94. Residue 170–200 (TYVIFGGGVAATNAANVALGLNAKVIIIELN) participates in NAD(+) binding.

Belongs to the AlaDH/PNT family.

It carries out the reaction L-alanine + NAD(+) + H2O = pyruvate + NH4(+) + NADH + H(+). It participates in amino-acid degradation; L-alanine degradation via dehydrogenase pathway; NH(3) and pyruvate from L-alanine: step 1/1. May play a role in cell wall synthesis as L-alanine is an important constituent of the peptidoglycan layer. In Staphylococcus aureus (strain MSSA476), this protein is Alanine dehydrogenase 1 (ald1).